A 504-amino-acid polypeptide reads, in one-letter code: Maturase K (504 aa).

This sequence belongs to the intron maturase 2 family. MatK subfamily.

The protein resides in the plastid. It is found in the chloroplast. In terms of biological role, usually encoded in the trnK tRNA gene intron. Probably assists in splicing its own and other chloroplast group II introns. The protein is Maturase K of Fagus japonica (Japanese beech).